A 2209-amino-acid chain; its full sequence is RNA-directed RNA polymerase L (2209 aa).

An endonuclease region spans residues 26 to 284 (KVTFLSQVHP…AHLDSDVSSC (259 aa)). The Mn(2+) site is built by E51, D89, and E102. Residue K115 is part of the active site. Residues 1172 to 1369 (CDMKMAVNNG…FLSSKLNKFV (198 aa)) form the RdRp catalytic domain. A Mg(2+)-binding site is contributed by D1330.

It belongs to the Bunyavirales RNA polymerase family. In terms of assembly, homomultimer; the oligomeric structure is essential for the polymerase activity. Interacts with nucleoprotein N. Interacts with protein Z; this interaction inhibits viral transcription and replication, Z partially blocks the product exit tunnel for the releasing nascent RNA product. Mn(2+) serves as cofactor. It depends on Mg(2+) as a cofactor.

Its subcellular location is the virion. It is found in the host cytoplasm. The catalysed reaction is RNA(n) + a ribonucleoside 5'-triphosphate = RNA(n+1) + diphosphate. Its function is as follows. RNA-dependent RNA polymerase, which is responsible for the replication and transcription of the viral RNA genome using antigenomic RNA as an intermediate. During transcription, synthesizes subgenomic RNAs and assures their capping by a cap-snatching mechanism, which involves the endonuclease activity cleaving the host capped pre-mRNAs. These short capped RNAs are then used as primers for viral transcription. The 3'-end of subgenomic mRNAs molecules are heterogeneous and not polyadenylated. The replicase function is to direct synthesis of antigenomic and genomic RNA which are encapsidated and non capped. As a consequence of the use of the same enzyme for both transcription and replication, these mechanisms need to be well coordinated. These processes may be regulated by proteins N and Z in a dose-dependent manner. Z protein inhibits the viral polymerase L und thus the viral transcription and RNA synthesis. This is RNA-directed RNA polymerase L from Calomys callosus (Large vesper mouse).